A 70-amino-acid chain; its full sequence is Large ribosomal subunit protein bL31 (70 aa).

Zn(2+) is bound by residues Cys17, Cys19, Cys37, and Cys40.

It belongs to the bacterial ribosomal protein bL31 family. Type A subfamily. In terms of assembly, part of the 50S ribosomal subunit. Zn(2+) serves as cofactor.

Functionally, binds the 23S rRNA. The chain is Large ribosomal subunit protein bL31 from Clostridium kluyveri (strain NBRC 12016).